A 518-amino-acid chain; its full sequence is Probable glycosyltransferase At5g03795 (518 aa).

Residues 1-25 (MGDEDVDGKCKNMSACSSTTSYSTK) lie on the Cytoplasmic side of the membrane. Residues 26-46 (LFLFMVPLVVISGFVFVNIGP) form a helical; Signal-anchor for type II membrane protein membrane-spanning segment. Topologically, residues 47-518 (KDSTSLLTSL…RRLNVKIREV (472 aa)) are lumenal. N-linked (GlcNAc...) asparagine glycans are attached at residues Asn-104, Asn-113, Asn-120, Asn-282, and Asn-320.

This sequence belongs to the glycosyltransferase 47 family.

It localises to the golgi apparatus membrane. May be involved in cell wall biosynthesis. The sequence is that of Probable glycosyltransferase At5g03795 from Arabidopsis thaliana (Mouse-ear cress).